A 509-amino-acid chain; its full sequence is ATP synthase subunit alpha (509 aa).

ATP is bound at residue 169–176 (GDRQTGKT).

The protein belongs to the ATPase alpha/beta chains family. In terms of assembly, F-type ATPases have 2 components, CF(1) - the catalytic core - and CF(0) - the membrane proton channel. CF(1) has five subunits: alpha(3), beta(3), gamma(1), delta(1), epsilon(1). CF(0) has three main subunits: a(1), b(2) and c(9-12). The alpha and beta chains form an alternating ring which encloses part of the gamma chain. CF(1) is attached to CF(0) by a central stalk formed by the gamma and epsilon chains, while a peripheral stalk is formed by the delta and b chains.

It is found in the cell inner membrane. The enzyme catalyses ATP + H2O + 4 H(+)(in) = ADP + phosphate + 5 H(+)(out). Functionally, produces ATP from ADP in the presence of a proton gradient across the membrane. The alpha chain is a regulatory subunit. The chain is ATP synthase subunit alpha from Brucella melitensis biotype 1 (strain ATCC 23456 / CCUG 17765 / NCTC 10094 / 16M).